Consider the following 147-residue polypeptide: 3-dehydroquinate dehydratase (147 aa).

Y23 (proton acceptor) is an active-site residue. Residues N74, H80, and D87 each contribute to the substrate site. The active-site Proton donor is the H100. Substrate-binding positions include 101 to 102 (IS) and R111.

Belongs to the type-II 3-dehydroquinase family. As to quaternary structure, homododecamer.

It carries out the reaction 3-dehydroquinate = 3-dehydroshikimate + H2O. The protein operates within metabolic intermediate biosynthesis; chorismate biosynthesis; chorismate from D-erythrose 4-phosphate and phosphoenolpyruvate: step 3/7. Catalyzes a trans-dehydration via an enolate intermediate. The protein is 3-dehydroquinate dehydratase of Prochlorococcus marinus (strain MIT 9215).